The chain runs to 240 residues: Carboxy-S-adenosyl-L-methionine synthase (240 aa).

S-adenosyl-L-methionine-binding positions include Tyr-35, 61–63 (GCS), 86–87 (DN), 112–113 (DI), and Arg-194.

It belongs to the class I-like SAM-binding methyltransferase superfamily. Cx-SAM synthase family. As to quaternary structure, homodimer.

The enzyme catalyses prephenate + S-adenosyl-L-methionine = carboxy-S-adenosyl-L-methionine + 3-phenylpyruvate + H2O. In terms of biological role, catalyzes the conversion of S-adenosyl-L-methionine (SAM) to carboxy-S-adenosyl-L-methionine (Cx-SAM). The chain is Carboxy-S-adenosyl-L-methionine synthase from Wolinella succinogenes (strain ATCC 29543 / DSM 1740 / CCUG 13145 / JCM 31913 / LMG 7466 / NCTC 11488 / FDC 602W) (Vibrio succinogenes).